Consider the following 1313-residue polypeptide: Histone-lysine N-methyltransferase, H3 lysine-4 specific (1313 aa).

Disordered stretches follow at residues 1-205, 400-458, 555-607, 667-792, 842-908, and 932-982; these read MSRS…DPSR, KKSR…KPRH, GKSS…AKNL, IVFD…AGED, ELPS…SKKQ, and AGIE…DPEL. Residues 7–18 are compositionally biased toward low complexity; sequence ASFAQFFPAAPR. A compositionally biased stretch (basic and acidic residues) spans 19 to 31; sequence AARDRATERERAR. The segment covering 70 to 80 has biased composition (polar residues); that stretch reads HITSLNHSSSA. A compositionally biased stretch (low complexity) spans 105–121; sequence SASSHTSTSSSIFSSST. Composition is skewed to polar residues over residues 130 to 158 and 174 to 186; these read SVRN…STSL and NGLT…SATD. Over residues 194-204 the composition is skewed to basic and acidic residues; the sequence is GTERVPPRDPS. The span at 559–607 shows a compositional bias: basic and acidic residues; it reads RSSEDHRRHSYGSEKRPPPEHRQRDDQDRRRRDEEADIEEEKKQRAKNL. A compositionally biased stretch (basic residues) spans 702-716; it reads RVRKLKSRGVNARKH. A compositionally biased stretch (basic and acidic residues) spans 758–784; it reads MIRDTEEPESRPRSRVSSEEDRNKEET. Residues 843 to 855 show a composition bias toward polar residues; the sequence is LPSQEQAVESVTP. Residues 868–884 show a composition bias toward basic and acidic residues; it reads ADVKAEPAEDKETEDSR. Residues 895–907 show a composition bias toward basic residues; that stretch reads PKKKAKAKKKSKK. Positions 960–978 are enriched in basic and acidic residues; that stretch reads LETKGEALEAPETESKPDL. A RxxxRR motif motif is present at residues 1137–1142; it reads RVNNRR. Positions 1171 to 1288 constitute an SET domain; it reads KPVKFARSAI…QNEELTYDYK (118 aa). An S-adenosyl-L-methionine-binding site is contributed by Y1287. Residues 1297 to 1313 form the Post-SET domain; it reads DRIPCLCGTAACKGFLN.

It belongs to the class V-like SAM-binding methyltransferase superfamily. As to quaternary structure, component of the Set1C/COMPASS complex.

It is found in the nucleus. It localises to the chromosome. It carries out the reaction L-lysyl(4)-[histone H3] + 3 S-adenosyl-L-methionine = N(6),N(6),N(6)-trimethyl-L-lysyl(4)-[histone H3] + 3 S-adenosyl-L-homocysteine + 3 H(+). The enzyme catalyses N(6)-methyl-L-lysyl(4)-[histone H3] + S-adenosyl-L-methionine = N(6),N(6)-dimethyl-L-lysyl(4)-[histone H3] + S-adenosyl-L-homocysteine + H(+). It catalyses the reaction N(6),N(6)-dimethyl-L-lysyl(4)-[histone H3] + S-adenosyl-L-methionine = N(6),N(6),N(6)-trimethyl-L-lysyl(4)-[histone H3] + S-adenosyl-L-homocysteine + H(+). Functionally, catalytic component of the COMPASS (Set1C) complex that specifically mono-, di- and trimethylates histone H3 to form H3K4me1/2/3. Binds RNAs which might negatively affect its histone methyltransferase activity. COMPASS recognizes ubiquitinated H2B on one face of the nucleosome which stimulates the methylation of H3 on the opposing face. In Neurospora crassa (strain ATCC 24698 / 74-OR23-1A / CBS 708.71 / DSM 1257 / FGSC 987), this protein is Histone-lysine N-methyltransferase, H3 lysine-4 specific (set-1).